The sequence spans 706 residues: MQLRNILQASSLISGLSLAADSSSTTGDGYAPSIIPCPSDDTSLVRNASGLSTAETDWLKKRDAYTKEALHSFLSRATSNFSDTSLLSTLFSSNSSNVPKIGIACSGGGYRAMLGGAGMIAAMDNRTDGANEHGLGGLLQSSTYLSGLSGGNWLTGTLAWNNWTSVQEIVDHMSESDSIWNITKSIVNPGGSNLTYTIERWESIVQEVQAKSDAGFNISLSDLWARALSYNFFPSLPDAGSALTWSSLRDVDVFKNGEMPLPITVADGRYPGTTVINLNATLFEFTPFEMGSWDPSLNAFTDVKYLGTNVTNGKPVNKDQCVSGYDNAGFVIATSASLFNEFSLEASTSTYYKMINSFANKYVNNLSQDDDDIAIYAANPFKDTEFVDRNYTSSIVDADDLFLVDGGEDGQNLPLVPLIKKERDLDVVFALDISDNTDESWPSGVCMTNTYERQYSKQGKGMAFPYVPDVNTFLNLGLTNKPTFFGCDAKNLTDLEYIPPLVVYIPNTKHSFNGNQSTLKMNYNVTERLGMIRNGFEAATMGNFTDDSNFLGCIGCAIIRRKQESLNATLPPECTKCFADYCWNGTLSTSANPELSGNSTYQSGAIASAISEATDGIPITALLGSSTSGNTTSNSTTSTSSNVTSNSNSSSNTTLNSNSSSSSISSSTARSSSSTANKANAAAISYANTNTLMSLLGAITALFGLI.

Positions 1–19 (MQLRNILQASSLISGLSLA) are cleaved as a signal peptide. Residues 36–588 (PCPSDDTSLV…ADYCWNGTLS (553 aa)) form the PLA2c domain. 25 N-linked (GlcNAc...) asparagine glycosylation sites follow: Asn-47, Asn-80, Asn-94, Asn-125, Asn-162, Asn-181, Asn-193, Asn-217, Asn-279, Asn-309, Asn-365, Asn-390, Asn-491, Asn-515, Asn-524, Asn-543, Asn-567, Asn-584, Asn-598, Asn-630, Asn-634, Asn-642, Asn-648, Asn-652, and Asn-658. Residues 627 to 672 (TSGNTTSNSTTSTSSNVTSNSNSSSNTTLNSNSSSSSISSSTARSS) form a disordered region. Asn-680 is lipidated: GPI-anchor amidated asparagine. A propeptide spans 681-706 (AAAISYANTNTLMSLLGAITALFGLI) (removed in mature form).

It belongs to the lysophospholipase family. In terms of processing, the GPI-anchor is attached to the protein in the endoplasmic reticulum and serves to target the protein to the cell surface. There, the glucosamine-inositol phospholipid moiety is cleaved off and the GPI-modified mannoprotein is covalently attached via its lipidless GPI glycan remnant to the 1,6-beta-glucan of the outer cell wall layer.

The protein localises to the secreted. It is found in the cell wall. Its subcellular location is the membrane. It catalyses the reaction a 1-acyl-sn-glycero-3-phosphocholine + H2O = sn-glycerol 3-phosphocholine + a fatty acid + H(+). The catalysed reaction is 1-hexadecanoyl-sn-glycero-3-phosphoethanolamine + H2O = sn-glycero-3-phosphoethanolamine + hexadecanoate + H(+). The enzyme catalyses 1-hexadecanoyl-sn-glycero-3-phosphocholine + H2O = sn-glycerol 3-phosphocholine + hexadecanoate + H(+). It carries out the reaction 1-hexadecanoyl-sn-glycero-3-phospho-L-serine + H2O = sn-glycero-3-phospho-L-serine + hexadecanoate + H(+). It catalyses the reaction 1,2-dihexadecanoyl-sn-glycero-3-phosphocholine + H2O = 1-hexadecanoyl-sn-glycero-3-phosphocholine + hexadecanoate + H(+). In terms of biological role, sequentially removes both fatty acyl groups from diacylglycerophospholipids and therefore has both phospholipase A and lysophospholipase activities. However, it does not display transacylase activity. Substrate preference is phosphatidylserine &gt; phosphatidylinositol &gt; phosphatidylcholine &gt; phosphatidylethanolamine. The substrate specificity is pH- and ion-dependent. In contrast with activities observed at optimum pH 3.5, the order of substrate preference at pH 5.5 is phosphatidylserine = phosphatidylethanolamine &gt; phosphatidylcholine &gt; phosphatidylinositol. This Saccharomyces cerevisiae (strain ATCC 204508 / S288c) (Baker's yeast) protein is Lysophospholipase 2 (PLB2).